The primary structure comprises 89 residues: Probable oxaloacetate decarboxylase gamma chain (89 aa).

The helical transmembrane segment at 13-33 threads the bilayer; sequence LMLSGMGFVITFLLILIWAIT.

It belongs to the OadG family. Heterotrimer of an alpha, a beta and a gamma subunit. Na(+) is required as a cofactor.

The protein resides in the cell membrane. The enzyme catalyses oxaloacetate + 2 Na(+)(in) + H(+) = pyruvate + 2 Na(+)(out) + CO2. Catalyzes the decarboxylation of oxaloacetate coupled to Na(+) translocation. The chain is Probable oxaloacetate decarboxylase gamma chain from Actinobacillus succinogenes (strain ATCC 55618 / DSM 22257 / CCUG 43843 / 130Z).